The following is a 75-amino-acid chain: Peptide Ctri10036 (75 aa).

The first 22 residues, 1–22 (MNSKYLFVFLILNVIFIDLCQG), serve as a signal peptide directing secretion. Lys-41 carries the lysine amide modification. A propeptide spanning residues 47–75 (ELGSQYDYLQDFRKRELDLDDLLSKFPDY) is cleaved from the precursor.

Belongs to the non-disulfide-bridged peptide (NDBP) superfamily. Short antimicrobial peptide (group 4) family. Expressed by the venom gland.

It is found in the secreted. The protein is Peptide Ctri10036 of Chaerilus tricostatus (Scorpion).